Reading from the N-terminus, the 665-residue chain is GRB2-associated-binding protein 2 (665 aa).

Residue Ser2 is modified to Phosphoserine. The 112-residue stretch at 8–119 (DVVCTGWLRK…WVQSICQICG (112 aa)) folds into the PH domain. Positions 131 to 184 (RNLSSASHGPRSSPAEFSSSQHLLRERKSSAPSHSSQPTLFTFEPPVSSHMQPT) are disordered. 10 positions are modified to phosphoserine: Ser135, Ser142, Ser143, Ser149, Ser150, Ser160, Ser165, Ser211, Ser220, and Ser261. The segment covering 160–170 (SAPSHSSQPTL) has biased composition (polar residues). The residue at position 262 (Thr262) is a Phosphothreonine. At Tyr263 the chain carries Phosphotyrosine. Thr275 is subject to Phosphothreonine. Residues Ser278 and Ser282 each carry the phosphoserine modification. Thr284 bears the Phosphothreonine mark. Tyr290 is subject to Phosphotyrosine. The residue at position 328 (Thr328) is a Phosphothreonine. The interval 338-396 (VATPGDSAIAPPPRPPKPSQAETSQWGSIQQRPPISENSRSVAATIPRRNTLPAMDNSR) is disordered. An SH3-binding motif is present at residues 348–355 (PPPRPPKP). Residues 357–379 (QAETSQWGSIQQRPPISENSRSV) show a composition bias toward polar residues. Position 365 is a phosphoserine (Ser365). A phosphothreonine mark is found at Thr382 and Thr388. Ser402 is subject to Phosphoserine. The residue at position 405 (Thr405) is a Phosphothreonine. The interval 408 to 445 (YPARGSGESASWSAEPPGKTAVGRSNSASSDDNYVPMN) is disordered. Position 420 is a phosphoserine (Ser420). Polar residues predominate over residues 430–439 (GRSNSASSDD). Tyr441 carries the phosphotyrosine modification. Phosphoserine is present on Ser469. The tract at residues 491-517 (PSRGSEIQPPPVNRNLKPDRKAKPTPL) is disordered. The short motif at 499–508 (PPPVNRNLKP) is the SH3-binding element. Residue Ser532 is modified to Phosphoserine. 2 stretches are compositionally biased toward polar residues: residues 548–566 (SSSQYCRPISTQSITSTDS) and 578–600 (NPVSASPVPSGTNSPAPKKSTGS). Disordered stretches follow at residues 548-632 (SSSQ…KVDY) and 646-665 (TMQEWTDVRQSSEPSKGAKL). Ser612 carries the post-translational modification Phosphoserine. Tyr632 bears the Phosphotyrosine mark. The span at 646 to 659 (TMQEWTDVRQSSEP) shows a compositional bias: polar residues.

The protein belongs to the GAB family. As to quaternary structure, part of a complex composed of EEIG1, TNFRSF11A/RANK, PLCG2, GAB2, TEC and BTK; complex formation increases in the presence of TNFSF11/RANKL. Interacts with HCK. Interacts with SHC1; may mediate interaction with receptors. Interacts with SYK. Interacts with PI-3 kinase. Interacts with GRB2 (via SH3 2 domain). Interacts (phosphorylated) with PTPN11. Interacts with TNFRSF11A (via cytoplasmic domain). Interacts (phosphorylated) with 14-3-3 family proteins SFN, YWHAB, YWHAE, YWHAG, YWHAH, YWHAQ and YWHAZ; prevents interaction with GRB2 and attenuates GAB2 signaling. Post-translationally, phosphorylated upon EGF stimulation. Phosphorylated on tyrosine residues by HCK upon IL6 signaling. Phosphorylated on tyrosine residue(s) by the thrombopoietin receptor (TPOR), stem cell factor receptor (SCFR), and T-cell and B-cell antigen receptors, gp130, IL-2R and IL-3R. Phosphorylated upon stimulation of TNFRSF11A/RANK by TNFSF11/RANKL. Dephosphorylated by PTPN11. In terms of tissue distribution, ubiquitously expressed.

It is found in the cytoplasm. The protein resides in the cell membrane. It localises to the membrane raft. Adapter protein which acts downstream of several membrane receptors including cytokine, antigen, hormone, cell matrix and growth factor receptors to regulate multiple signaling pathways. Regulates osteoclast differentiation mediating the TNFRSF11A/RANK signaling. In allergic response, it plays a role in mast cells activation and degranulation through PI-3-kinase regulation. Also involved in the regulation of cell proliferation and hematopoiesis. This is GRB2-associated-binding protein 2 (Gab2) from Mus musculus (Mouse).